A 293-amino-acid polypeptide reads, in one-letter code: 4-diphosphocytidyl-2-C-methyl-D-erythritol kinase (293 aa).

K10 is an active-site residue. Residue 94-104 (PVSAGLAGGSS) coordinates ATP. D136 is an active-site residue.

Belongs to the GHMP kinase family. IspE subfamily.

The enzyme catalyses 4-CDP-2-C-methyl-D-erythritol + ATP = 4-CDP-2-C-methyl-D-erythritol 2-phosphate + ADP + H(+). It participates in isoprenoid biosynthesis; isopentenyl diphosphate biosynthesis via DXP pathway; isopentenyl diphosphate from 1-deoxy-D-xylulose 5-phosphate: step 3/6. Its function is as follows. Catalyzes the phosphorylation of the position 2 hydroxy group of 4-diphosphocytidyl-2C-methyl-D-erythritol. This chain is 4-diphosphocytidyl-2-C-methyl-D-erythritol kinase, found in Listeria monocytogenes serovar 1/2a (strain ATCC BAA-679 / EGD-e).